The primary structure comprises 1188 residues: DNA-directed RNA polymerase subunit beta (1188 aa).

The protein belongs to the RNA polymerase beta chain family. As to quaternary structure, the RNAP catalytic core consists of 2 alpha, 1 beta, 1 beta' and 1 omega subunit. When a sigma factor is associated with the core the holoenzyme is formed, which can initiate transcription.

It carries out the reaction RNA(n) + a ribonucleoside 5'-triphosphate = RNA(n+1) + diphosphate. In terms of biological role, DNA-dependent RNA polymerase catalyzes the transcription of DNA into RNA using the four ribonucleoside triphosphates as substrates. This is DNA-directed RNA polymerase subunit beta from Streptococcus equi subsp. zooepidemicus (strain H70).